We begin with the raw amino-acid sequence, 140 residues long: Baculoviral IAP repeat-containing protein 5 (140 aa).

The stretch at 18 to 88 (RIATFKNWPF…KHSPGCAFLT (71 aa)) is one BIR repeat. Lysine 23 is subject to N6-acetyllysine. Phosphothreonine; by CDK1 and CDK15 is present on threonine 34. Threonine 48 carries the post-translational modification Phosphothreonine. Residues cysteine 57, cysteine 60, glutamate 76, histidine 77, histidine 80, and cysteine 84 each coordinate Zn(2+). Residues lysine 90, lysine 110, lysine 112, and lysine 115 each carry the N6-acetyllysine modification. A compositionally biased stretch (basic and acidic residues) spans 113-129 (IAKETNNKQKEFEETAK). Residues 113–140 (IAKETNNKQKEFEETAKTTRQSIEQLAA) form a disordered region. Position 117 is a phosphothreonine; by AURKB (threonine 117). At lysine 129 the chain carries N6-acetyllysine. Over residues 130–140 (TTRQSIEQLAA) the composition is skewed to polar residues.

Belongs to the IAP family. In terms of assembly, monomer or homodimer. Exists as a homodimer in the apo state and as a monomer in the CPC-bound state. The monomer protects cells against apoptosis more efficiently than the dimer. Only the dimeric form is capable of enhancing tubulin stability in cells. When phosphorylated, interacts with LAMTOR5/HBXIP; the resulting complex binds pro-CASP9, as well as active CASP9, but much less efficiently. Component of the chromosomal passenger complex (CPC) composed of at least BIRC5/survivin, CDCA8/borealin, INCENP, AURKB or AURKC; in the complex forms a triple-helix bundle-based subcomplex with INCENP and CDCA8. Interacts with JTB. Interacts (via BIR domain) with histone H3 phosphorylated at 'Thr-3' (H3pT3). Interacts with EVI5. Interacts with GTP-bound RAN in both the S and M phases of the cell cycle. Interacts with USP9X. Interacts with tubulin. Interacts with BIRC2/c-IAP1. The acetylated form at Lys-129 interacts with STAT3. The monomeric form deacetylated at Lys-129 interacts with XPO1/CRM1. The monomeric form interacts with XIAP/BIRC4. Both the dimeric and monomeric form can interact with DIABLO/SMAC. Interacts with BIRC6/bruce. Interacts with FBXL7; this interaction facilitates the polyubiquitination and subsequent proteasomal degradation of BIRC5 by the SCF(FBXL7) E3 ubiquitin-protein ligase complex. In terms of processing, ubiquitinated by the Cul9-RING ubiquitin-protein ligase complex, leading to its degradation. Ubiquitination is required for centrosomal targeting. Deubiquitinated by USP35 or USP38; leading to stabilization. Acetylation at Lys-129 results in its homodimerization, while deacetylation promotes the formation of monomers which heterodimerize with XPO1/CRM1 which facilitates its nuclear export. The acetylated form represses STAT3 transactivation. The dynamic equilibrium between its acetylation and deacetylation at Lys-129 determines its interaction with XPO1/CRM1, its subsequent subcellular localization, and its ability to inhibit STAT3 transactivation. Post-translationally, in vitro phosphorylation at Thr-117 by AURKB prevents interaction with INCENP and localization to mitotic chromosomes. Phosphorylation at Thr-48 by CK2 is critical for its mitotic and anti-apoptotic activities. Phosphorylation at Thr-34 by CDK15 is critical for its anti-apoptotic activity.

It localises to the cytoplasm. The protein resides in the nucleus. The protein localises to the chromosome. Its subcellular location is the centromere. It is found in the cytoskeleton. It localises to the spindle. The protein resides in the kinetochore. The protein localises to the midbody. Its function is as follows. Multitasking protein that has dual roles in promoting cell proliferation and preventing apoptosis. Component of a chromosome passage protein complex (CPC) which is essential for chromosome alignment and segregation during mitosis and cytokinesis. Acts as an important regulator of the localization of this complex; directs CPC movement to different locations from the inner centromere during prometaphase to midbody during cytokinesis and participates in the organization of the center spindle by associating with polymerized microtubules. Involved in the recruitment of CPC to centromeres during early mitosis via association with histone H3 phosphorylated at 'Thr-3' (H3pT3) during mitosis. The complex with RAN plays a role in mitotic spindle formation by serving as a physical scaffold to help deliver the RAN effector molecule TPX2 to microtubules. May counteract a default induction of apoptosis in G2/M phase. The acetylated form represses STAT3 transactivation of target gene promoters. May play a role in neoplasia. Inhibitor of CASP3 and CASP7. Essential for the maintenance of mitochondrial integrity and function. The polypeptide is Baculoviral IAP repeat-containing protein 5 (Birc5) (Mus musculus (Mouse)).